The primary structure comprises 202 residues: 3-isopropylmalate dehydratase small subunit (202 aa).

The protein belongs to the LeuD family. LeuD type 1 subfamily. In terms of assembly, heterodimer of LeuC and LeuD.

The catalysed reaction is (2R,3S)-3-isopropylmalate = (2S)-2-isopropylmalate. It participates in amino-acid biosynthesis; L-leucine biosynthesis; L-leucine from 3-methyl-2-oxobutanoate: step 2/4. Its function is as follows. Catalyzes the isomerization between 2-isopropylmalate and 3-isopropylmalate, via the formation of 2-isopropylmaleate. The sequence is that of 3-isopropylmalate dehydratase small subunit from Novosphingobium aromaticivorans (strain ATCC 700278 / DSM 12444 / CCUG 56034 / CIP 105152 / NBRC 16084 / F199).